A 551-amino-acid polypeptide reads, in one-letter code: FGGY carbohydrate kinase domain-containing protein (551 aa).

This sequence belongs to the FGGY kinase family. As to expression, expressed in kidney, lung and small intestine and to a lower extent in liver and detected in cerebrospinal fluid (at protein level).

The enzyme catalyses D-ribulose + ATP = D-ribulose 5-phosphate + ADP + H(+). Its pathway is carbohydrate metabolism; pentose and glucuronate interconversion. Its function is as follows. Catalyzes ATP-dependent phosphorylation of D-ribulose at C-5 to form D-ribulose 5-phosphate. Postulated to function in a metabolite repair mechanism by preventing toxic accumulation of free D-ribulose formed by non-specific phosphatase activities. Alternatively, may play a role in regulating D-ribulose 5-phosphate recycling in the pentose phosphate pathway. Can phosphorylate ribitol with low efficiency. This is FGGY carbohydrate kinase domain-containing protein from Homo sapiens (Human).